We begin with the raw amino-acid sequence, 207 residues long: Lipid A acyltransferase PagP (207 aa).

Positions 1–24 (MKFDLTAACTLSATLLVSSGTVFA) are cleaved as a signal peptide. Residues His-79, Asp-122, and Ser-123 contribute to the active site.

This sequence belongs to the lipid A palmitoyltransferase family. As to quaternary structure, homodimer.

The protein localises to the cell outer membrane. It catalyses the reaction a lipid A + a 1,2-diacyl-sn-glycero-3-phosphocholine = a hepta-acyl lipid A + a 2-acyl-sn-glycero-3-phosphocholine. The enzyme catalyses a lipid IVA + a 1,2-diacyl-sn-glycero-3-phosphocholine = a lipid IVB + a 2-acyl-sn-glycero-3-phosphocholine. The catalysed reaction is a lipid IIA + a 1,2-diacyl-sn-glycero-3-phosphocholine = a lipid IIB + a 2-acyl-sn-glycero-3-phosphocholine. In terms of biological role, transfers a fatty acid residue from the sn-1 position of a phospholipid to the N-linked hydroxyfatty acid chain on the proximal unit of lipid A or its precursors. The sequence is that of Lipid A acyltransferase PagP from Photorhabdus laumondii subsp. laumondii (strain DSM 15139 / CIP 105565 / TT01) (Photorhabdus luminescens subsp. laumondii).